The primary structure comprises 95 residues: Probable dolichol-phosphate mannosyltransferase subunit 3 (95 aa).

2 consecutive transmembrane segments (helical) span residues 10 to 30 and 44 to 64; these read AHVI…VPVL and APFF…VYGV.

This sequence belongs to the DPM3 family.

The protein localises to the endoplasmic reticulum membrane. Its pathway is protein modification; protein glycosylation. Functionally, stabilizer subunit of the dolichol-phosphate-mannose synthase complex. The sequence is that of Probable dolichol-phosphate mannosyltransferase subunit 3 (dpm-3) from Caenorhabditis elegans.